We begin with the raw amino-acid sequence, 986 residues long: DNA polymerase I (986 aa).

The 303-residue stretch at 1–303 folds into the 5'-3' exonuclease domain; it reads MFMSAKSPLL…RTFIDKIQAF (303 aa). A 3'-5' exonuclease domain is found at 304-592; it reads HRNFSDNQSP…MEDRGIRIDC (289 aa). The tract at residues 308 to 327 is disordered; that stretch reads SDNQSPVPMGNEADNGEPKK. Residues 593 to 986 form a polymerase region; sequence DYLQTLSQQL…HRGSNWMEAK (394 aa).

This sequence belongs to the DNA polymerase type-A family. In terms of assembly, single-chain monomer with multiple functions.

It carries out the reaction DNA(n) + a 2'-deoxyribonucleoside 5'-triphosphate = DNA(n+1) + diphosphate. Its function is as follows. In addition to polymerase activity, this DNA polymerase exhibits 3'-5' and 5'-3' exonuclease activity. This is DNA polymerase I (polA) from Synechocystis sp. (strain ATCC 27184 / PCC 6803 / Kazusa).